The primary structure comprises 1075 residues: MDNKRLYNGNLSNIPEVIDPGITIPIYEEDIRNDTRMNTNARSVRVSDKRGRSSSTSPQKIGSYRTRAGRFSDTLTNLLPSISAKLHHSKKSTPVVVVPPTSSTPDSLNSTTYAPRVSSDSFTVATPLSLQSTTTRTRTRNNTVSSQITASSSLTTDVGNATSANIWSANAESNTSSSPLFDYPLATSYFEPLTRFKSTDNYTLPQTAQLNSFLEKNGNPNIWSSAGNSNTDHLNTPIVNRQRSQSQSTTNRVYTDAPYYQQPAQNYQVQVPPRVPKSTSISPVILDDVDPASINWITANQKVPLVNQISALLPTNTISISNVFPLQPTQQHQQNAVNLTSTSLATLCSQYGKVLSARTLRGLNMALVEFSTVESAICALEALQGKELSKVGAPSTVSFARVLPMYEQPLNVNGFNNTPKQPLLQEQLNHGVLNYQLQQSLQQPELQQQPTSFNQPNLTYCNPTQNLSHLQLSSNENEPYPFPLPPPSLSDSKKDILHTISSFKLEYDHLELNHLLQNALKNKGVSDTNYFGPLPEHNSKVPKRKDTFDAPKLRELRKQFDSNSLSTIEMEQLAIVMLDQLPELSSDYLGNTVIQKLFENSSNIIRDIMLRKCNKYLTSMGVHKNGTWVCQKIIKMANTPRQINLVTSGVSDYCTPLFNDQFGNYVIQGILKFGFPWNSFIFESVLSHFWTIVQNRYGSRAVRACLEADSIITQCQLLTITSLIIVLSPYLATDTNGTLLITWLLDTCTLPNKNLILCDKLVNKNLVKLCCHKLGSLTVLKILNLRGGEEEALSKNKIIHAIFDGPISSDSILFQILDEGNYGPTFIYKVLTSRILDNSVRDEAITKIRQLILNSNINLQSRQLLEEVGLSSAGISPKQSSKNHRKQHPQGFHSPGRARGVSVSSVRSSNSRHNSVIQMNNAGPTPALNFNPAPMSEINSYFNNQQVVYSGNQNQNQNGNSNGLDELNSQFDSFRIANGTNLSLPIVNLPNVSNNNNNYNNSGYSSQMNPLSRSVSHNNNNNTNNYNNNDNDNNNNNNNNNNNNNNNNNNNNNSNNSNNNNNNDTSLYRYRSYGY.

Positions 38-68 (NTNARSVRVSDKRGRSSSTSPQKIGSYRTRA) are disordered. The residue at position 72 (serine 72) is a Phosphoserine. Over residues 93–105 (TPVVVVPPTSSTP) the composition is skewed to low complexity. The interval 93 to 112 (TPVVVVPPTSSTPDSLNSTT) is disordered. Serine 198 carries the phosphoserine modification. The region spanning 316-402 (NTISISNVFP…APSTVSFARV (87 aa)) is the RRM domain. The region spanning 511–872 (ELNHLLQNAL…QLLEEVGLSS (362 aa)) is the PUM-HD domain. 6 Pumilio repeats span residues 574 to 611 (AIVM…IMLR), 612 to 647 (KCNK…NLVT), 649 to 683 (GVSD…FIFE), 684 to 719 (SVLS…QLLT), 722 to 758 (SLII…LILC), and 760 to 800 (KLVN…KIIH). Residues serine 872 and serine 876 each carry the phosphoserine modification. Disordered stretches follow at residues 874–931 (GISP…LNFN) and 997–1075 (NNYN…SYGY). Low complexity-rich tracts occupy residues 901–916 (VSVS…HNSV), 997–1009 (NNYN…SQMN), and 1018–1063 (NNNN…NNNN).

The protein localises to the cytoplasm. Its function is as follows. RNA-binding protein involved in post-transcriptional regulation. Negatively regulates expression of COX17 by binding to the 3'-UTR of COX17 mRNA. Promotes decay of COX17 mRNA by enhancing its rate of deadenylation and subsequent turnover. Predominantly binds to mRNAs encoding membrane-associated proteins with roles in transmembrane transport and vesicular trafficking. The sequence is that of mRNA-binding protein PUF2 (PUF2) from Saccharomyces cerevisiae (strain ATCC 204508 / S288c) (Baker's yeast).